The sequence spans 467 residues: Glutamate--tRNA ligase (467 aa).

The 'HIGH' region signature appears at 9-19; the sequence is PSPTGYLHIGG. A 'KMSKS' region motif is present at residues 237 to 241; sequence KLSKR. ATP is bound at residue K240.

This sequence belongs to the class-I aminoacyl-tRNA synthetase family. Glutamate--tRNA ligase type 1 subfamily. Monomer.

The protein resides in the cytoplasm. It carries out the reaction tRNA(Glu) + L-glutamate + ATP = L-glutamyl-tRNA(Glu) + AMP + diphosphate. Functionally, catalyzes the attachment of glutamate to tRNA(Glu) in a two-step reaction: glutamate is first activated by ATP to form Glu-AMP and then transferred to the acceptor end of tRNA(Glu). The protein is Glutamate--tRNA ligase of Xanthomonas campestris pv. campestris (strain B100).